Here is a 210-residue protein sequence, read N- to C-terminus: Small ribosomal subunit protein uS3 (210 aa).

In terms of domain architecture, KH type-2 spans 38–106 (LRSFLKKRLY…EVYLNIQEVR (69 aa)).

It belongs to the universal ribosomal protein uS3 family. Part of the 30S ribosomal subunit. Forms a tight complex with proteins S10 and S14.

Binds the lower part of the 30S subunit head. Binds mRNA in the 70S ribosome, positioning it for translation. The polypeptide is Small ribosomal subunit protein uS3 (Geotalea uraniireducens (strain Rf4) (Geobacter uraniireducens)).